The following is a 213-amino-acid chain: Pyrrolidone-carboxylate peptidase (213 aa).

Active-site residues include E78, C141, and H165.

Belongs to the peptidase C15 family. As to quaternary structure, homotetramer.

The protein localises to the cytoplasm. It carries out the reaction Release of an N-terminal pyroglutamyl group from a polypeptide, the second amino acid generally not being Pro.. Functionally, removes 5-oxoproline from various penultimate amino acid residues except L-proline. The polypeptide is Pyrrolidone-carboxylate peptidase (Enterococcus faecalis (strain ATCC 700802 / V583)).